The chain runs to 326 residues: Ribose operon repressor (326 aa).

An HTH lacI-type domain is found at 1–56 (MATIKDVAGAAGVSVATVSRNLNDNGYVHEETRTRVIAAMAKLNYYPNEVARSLYK). The segment at residues 4 to 23 (IKDVAGAAGVSVATVSRNLN) is a DNA-binding region (H-T-H motif).

In terms of biological role, transcriptional repressor for the ribose rbsDACBK operon. This Bacillus subtilis (strain 168) protein is Ribose operon repressor (rbsR).